Here is a 1205-residue protein sequence, read N- to C-terminus: Plasma membrane calcium-transporting ATPase 1 (1205 aa).

Over 2–104 the chain is Cytoplasmic; it reads GDMANNSVAY…KTFLQLVWEA (103 aa). The calmodulin-binding subdomain A stretch occupies residues 94–111; the sequence is PKTFLQLVWEALQDVTLI. The helical transmembrane segment at 105–125 threads the bilayer; it reads LQDVTLIILEIAAVVSLGLSF. Topologically, residues 126-153 are extracellular; sequence YQPPGGNEALCGSVNVGEEEEESEAGWI. A helical transmembrane segment spans residues 154-174; that stretch reads EGAAILLSVVCVVLVTAFNDW. The Cytoplasmic portion of the chain corresponds to 175–351; the sequence is SKEKQFRGLQ…KEKSVLQGKL (177 aa). The tract at residues 296 to 343 is disordered; that stretch reads EEEKEKEKKDKKTKAQDGAAMEMQPLKSEDGVDGDEKDKKRSNLPKKE. 2 stretches are compositionally biased toward basic and acidic residues: residues 300–310 and 322–343; these read EKEKKDKKTKA and KSED…PKKE. The chain crosses the membrane as a helical span at residues 352–371; sequence TKLAVQIGKAGLLMSAITVI. The Extracellular segment spans residues 372-403; that stretch reads ILVLYFVIDTSWVQKRPWLAECTPIYIQYFVK. A helical transmembrane segment spans residues 404-424; it reads FFIIGVTVLVVAVPEGLPLAV. Residues 425–840 lie on the Cytoplasmic side of the membrane; that stretch reads TISLAYSVKK…RNVYDSISKF (416 aa). D460 serves as the catalytic 4-aspartylphosphate intermediate. 3 residues coordinate Mg(2+): D460, T462, and D782. The helical transmembrane segment at 841-861 threads the bilayer; sequence LQFQLTVNVVAVIVAFTGACI. Residues 862–868 lie on the Extracellular side of the membrane; that stretch reads TQDSPLK. A helical membrane pass occupies residues 869–889; that stretch reads AVQMLWVNLIMDTLASLALAT. Topologically, residues 890–912 are cytoplasmic; sequence EPPTEALLLRKPYGRNKPLISRT. Residues 913 to 933 traverse the membrane as a helical segment; it reads MMKNILGHAFYQLVVVFTLLF. The Extracellular portion of the chain corresponds to 934–956; that stretch reads AGEKIFDIDSGRNAPLHAPPSEH. Residues 957-976 form a helical membrane-spanning segment; the sequence is YTIVFNTFVMMQLFNEINAR. The Cytoplasmic portion of the chain corresponds to 977 to 990; the sequence is KIHGERNVFEGIFN. Residues 991 to 1012 form a helical membrane-spanning segment; the sequence is NAIFCTIVLGTFVVQIIIVQFG. Over 1013-1024 the chain is Extracellular; sequence GKPFSCSKLSIE. A helical transmembrane segment spans residues 1025-1045; the sequence is QWLWSVFLGMGTLLWGQLIST. At 1046 to 1205 the chain is on the cytoplasmic side; that stretch reads IPTSRLKFLK…SPLHSLETSL (160 aa). T1101 is modified (phosphothreonine; by PKC). Residues 1145-1205 are disordered; sequence PLIDDTDAED…SPLHSLETSL (61 aa). Over residues 1183-1205 the composition is skewed to polar residues; that stretch reads TDMNKSATSSSPGSPLHSLETSL.

Belongs to the cation transport ATPase (P-type) (TC 3.A.3) family. Type IIB subfamily.

The protein resides in the cell membrane. It carries out the reaction Ca(2+)(in) + ATP + H2O = Ca(2+)(out) + ADP + phosphate + H(+). Catalyzes the hydrolysis of ATP coupled with the transport of calcium from the cytoplasm to the extracellular space thereby maintaining intracellular calcium homeostasis. The chain is Plasma membrane calcium-transporting ATPase 1 from Gallus gallus (Chicken).